Here is a 248-residue protein sequence, read N- to C-terminus: tRNA pseudouridine synthase A (248 aa).

Asp53 (nucleophile) is an active-site residue. Tyr111 is a substrate binding site.

Belongs to the tRNA pseudouridine synthase TruA family. Homodimer.

The catalysed reaction is uridine(38/39/40) in tRNA = pseudouridine(38/39/40) in tRNA. Formation of pseudouridine at positions 38, 39 and 40 in the anticodon stem and loop of transfer RNAs. This is tRNA pseudouridine synthase A from Listeria monocytogenes serotype 4b (strain CLIP80459).